We begin with the raw amino-acid sequence, 59 residues long: Large ribosomal subunit protein uL30 (59 aa).

Belongs to the universal ribosomal protein uL30 family. In terms of assembly, part of the 50S ribosomal subunit.

The chain is Large ribosomal subunit protein uL30 from Psychrobacter sp. (strain PRwf-1).